The chain runs to 383 residues: Ceramide synthase 3 (383 aa).

The chain crosses the membrane as a helical span at residues 32-52; the sequence is VFVKPSHLYVTIPYAFLLLII. The segment at 66-127 is homeobox-like; it reads KSFGIKETVR…RSRRNQERPS (62 aa). One can recognise a TLC domain in the interval 130 to 331; the sequence is KKFQEACWRF…ILKMLNRCIF (202 aa). The next 5 membrane-spanning stretches (helical) occupy residues 139–159, 174–194, 205–225, 264–284, and 298–318; these read FAFY…KPWL, LLPS…SLLF, FLAH…SWCA, FFIF…FWIL, and FFSY…HLYW. Residues 319 to 383 are Cytoplasmic-facing; that stretch reads GYYILKMLNR…HLIPNGQHGH (65 aa). Phosphoserine is present on Ser340. A compositionally biased stretch (acidic residues) spans 342–355; that stretch reads DEDYEEEEEEEEEE. The disordered stretch occupies residues 342–363; sequence DEDYEEEEEEEEEEATKGKEMD.

In terms of tissue distribution, expressed in the epidermis, where it localizes at the interface between the stratum granulosum and the stratum corneum (at protein level).

The protein resides in the endoplasmic reticulum membrane. The catalysed reaction is a very long-chain fatty acyl-CoA + a sphingoid base = an N-(very-long-chain fatty acyl)-sphingoid base + CoA + H(+). It catalyses the reaction docosanoyl-CoA + sphinganine = N-docosanoylsphinganine + CoA + H(+). It carries out the reaction tetracosanoyl-CoA + sphinganine = N-tetracosanoylsphinganine + CoA + H(+). The enzyme catalyses hexacosanoyl-CoA + sphinganine = N-hexacosanoylsphinganine + CoA + H(+). The catalysed reaction is 2-hydroxydocosanoyl-CoA + sphinganine = N-(2-hydroxydocosanoyl)-sphinganine + CoA + H(+). It catalyses the reaction 2-hydroxytetracosanoyl-CoA + sphinganine = N-(2-hydroxytetracosanoyl)-sphinganine + CoA + H(+). It carries out the reaction an ultra-long-chain fatty acyl-CoA + a sphingoid base = an N-(ultra-long-chain-acyl)-sphingoid base + CoA + H(+). The enzyme catalyses octacosanoyl-CoA + sphinganine = N-(octacosanoyl)-sphinganine + CoA + H(+). The catalysed reaction is a fatty acyl-CoA + sphing-4-enine = an N-acylsphing-4-enine + CoA + H(+). It catalyses the reaction sphinganine + octadecanoyl-CoA = N-(octadecanoyl)-sphinganine + CoA + H(+). It carries out the reaction 2-hydroxyoctadecanoyl-CoA + sphinganine = N-(2-hydroxyoctadecanoyl)-sphinganine + CoA + H(+). It functions in the pathway lipid metabolism; sphingolipid metabolism. In terms of biological role, ceramide synthase that catalyzes the transfer of the acyl chain from acyl-CoA to a sphingoid base, with high selectivity toward very- and ultra-long-chain fatty acyl-CoA (chain length greater than C22). N-acylates sphinganine and sphingosine bases to form dihydroceramides and ceramides in de novo synthesis and salvage pathways, respectively. It is crucial for the synthesis of ultra-long-chain ceramides in the epidermis, to maintain epidermal lipid homeostasis and terminal differentiation. This is Ceramide synthase 3 from Homo sapiens (Human).